A 201-amino-acid polypeptide reads, in one-letter code: dTTP/UTP pyrophosphatase (201 aa).

Asp81 functions as the Proton acceptor in the catalytic mechanism.

The protein belongs to the Maf family. YhdE subfamily. The cofactor is a divalent metal cation.

It is found in the cytoplasm. The enzyme catalyses dTTP + H2O = dTMP + diphosphate + H(+). It catalyses the reaction UTP + H2O = UMP + diphosphate + H(+). Its function is as follows. Nucleoside triphosphate pyrophosphatase that hydrolyzes dTTP and UTP. May have a dual role in cell division arrest and in preventing the incorporation of modified nucleotides into cellular nucleic acids. This chain is dTTP/UTP pyrophosphatase, found in Bordetella avium (strain 197N).